The following is a 431-amino-acid chain: 5-methylthioadenosine/S-adenosylhomocysteine deaminase (431 aa).

Residues His-63 and His-65 each contribute to the Zn(2+) site. Glu-92, Arg-144, and His-184 together coordinate substrate. Residue His-211 participates in Zn(2+) binding. Substrate-binding residues include Glu-214 and Asp-299. Asp-299 serves as a coordination point for Zn(2+).

The protein belongs to the metallo-dependent hydrolases superfamily. MTA/SAH deaminase family. Requires Zn(2+) as cofactor.

It catalyses the reaction S-adenosyl-L-homocysteine + H2O + H(+) = S-inosyl-L-homocysteine + NH4(+). The catalysed reaction is S-methyl-5'-thioadenosine + H2O + H(+) = S-methyl-5'-thioinosine + NH4(+). Catalyzes the deamination of 5-methylthioadenosine and S-adenosyl-L-homocysteine into 5-methylthioinosine and S-inosyl-L-homocysteine, respectively. Is also able to deaminate adenosine. The protein is 5-methylthioadenosine/S-adenosylhomocysteine deaminase of Thermoanaerobacter pseudethanolicus (strain ATCC 33223 / 39E) (Clostridium thermohydrosulfuricum).